A 286-amino-acid polypeptide reads, in one-letter code: Beta-lactamase SHV-34 (286 aa).

A signal peptide spans 1-21 (MRYFRLCIISLLATLPLAVHA). S66 serves as the catalytic Acyl-ester intermediate. C73 and C119 are disulfide-bonded. E164 functions as the Proton acceptor in the catalytic mechanism. 230–232 (KTG) contacts substrate.

This sequence belongs to the class-A beta-lactamase family.

The catalysed reaction is a beta-lactam + H2O = a substituted beta-amino acid. In terms of biological role, hydrolyzes ceftazidime and cefotaxime. This Escherichia coli protein is Beta-lactamase SHV-34 (bla).